A 341-amino-acid chain; its full sequence is Glycerol-3-phosphate dehydrogenase [NAD(P)+] (341 aa).

NADPH-binding residues include serine 12, tryptophan 13, arginine 33, and lysine 107. Residues lysine 107, glycine 134, and threonine 136 each contribute to the sn-glycerol 3-phosphate site. Alanine 138 serves as a coordination point for NADPH. Sn-glycerol 3-phosphate-binding residues include lysine 189, aspartate 242, serine 252, arginine 253, and asparagine 254. The active-site Proton acceptor is lysine 189. Arginine 253 contributes to the NADPH binding site. Valine 277 and glutamate 279 together coordinate NADPH.

It belongs to the NAD-dependent glycerol-3-phosphate dehydrogenase family.

The protein localises to the cytoplasm. The enzyme catalyses sn-glycerol 3-phosphate + NAD(+) = dihydroxyacetone phosphate + NADH + H(+). It carries out the reaction sn-glycerol 3-phosphate + NADP(+) = dihydroxyacetone phosphate + NADPH + H(+). It participates in membrane lipid metabolism; glycerophospholipid metabolism. Functionally, catalyzes the reduction of the glycolytic intermediate dihydroxyacetone phosphate (DHAP) to sn-glycerol 3-phosphate (G3P), the key precursor for phospholipid synthesis. The polypeptide is Glycerol-3-phosphate dehydrogenase [NAD(P)+] (Halothermothrix orenii (strain H 168 / OCM 544 / DSM 9562)).